We begin with the raw amino-acid sequence, 271 residues long: MASENMTPQDYIGHHLNNLQLDLRTFSLVDPHNPPATFWTINIDSMFFSVVLGLLFLVLFRSVAKKATSGVPGKFQTAIELVIGFVNGSVKDMYHGKSKLIAPLALTIFVWVFLMNLMDLLPIDLLPYIAEHVLGLPALRVVPSADVNVTLSMALGVFILILFYSIKMKGIGGFTKELTLQPFNHWAFIPVNLILEGVSLLSKPVSLGLRLFGNMYAGELIFILIAGLLPWWSQWILNVPWAIFHILIITLQAFIFMVLTIVYLSMASEEH.

A run of 5 helical transmembrane segments spans residues 40–60 (TINIDSMFFSVVLGLLFLVLF), 100–120 (LIAPLALTIFVWVFLMNLMDL), 146–166 (DVNVTLSMALGVFILILFYSI), 220–240 (LIFILIAGLLPWWSQWILNVP), and 242–262 (AIFHILIITLQAFIFMVLTIV).

Belongs to the ATPase A chain family. F-type ATPases have 2 components, CF(1) - the catalytic core - and CF(0) - the membrane proton channel. CF(1) has five subunits: alpha(3), beta(3), gamma(1), delta(1), epsilon(1). CF(0) has three main subunits: a(1), b(2) and c(9-12). The alpha and beta chains form an alternating ring which encloses part of the gamma chain. CF(1) is attached to CF(0) by a central stalk formed by the gamma and epsilon chains, while a peripheral stalk is formed by the delta and b chains.

The protein localises to the cell inner membrane. In terms of biological role, key component of the proton channel; it plays a direct role in the translocation of protons across the membrane. The chain is ATP synthase subunit a from Escherichia coli O1:K1 / APEC.